A 241-amino-acid chain; its full sequence is MQCFSFIKTMMILFNLLIFLCGAALLAVGIWVSIDGASFLKIFGPLSSSAMQFVNVGYFLIAAGVVVFALGFLGCYGAKTESKCALVTFFFILLLIFIAEVAAAVVALVYTTMAEHFLTLLVVPAIKKDYGSQEDFTQVWNTTMKGLKCCGFTNYTDFEDSPYFKENSAFPPFCCNDNVTNTANETCTKQKAHDQKVEGCFNQLLYDIRTNAVTVGGVAAGIGGLELAAMIVSMYLYCNLQ.

Topologically, residues 1 to 11 (MQCFSFIKTMM) are cytoplasmic. A helical membrane pass occupies residues 12–32 (ILFNLLIFLCGAALLAVGIWV). Topologically, residues 33-52 (SIDGASFLKIFGPLSSSAMQ) are extracellular. Residues 53 to 73 (FVNVGYFLIAAGVVVFALGFL) form a helical membrane-spanning segment. The Cytoplasmic portion of the chain corresponds to 74 to 88 (GCYGAKTESKCALVT). A helical membrane pass occupies residues 89–109 (FFFILLLIFIAEVAAAVVALV). Residues 110–211 (YTTMAEHFLT…NQLLYDIRTN (102 aa)) are Extracellular-facing. N-linked (GlcNAc...) asparagine glycans are attached at residues asparagine 141, asparagine 154, asparagine 178, and asparagine 184. The chain crosses the membrane as a helical span at residues 212–232 (AVTVGGVAAGIGGLELAAMIV). Over 233 to 241 (SMYLYCNLQ) the chain is Cytoplasmic.

The protein belongs to the tetraspanin (TM4SF) family. As to quaternary structure, interacts with SLC19A2. Interacts with NTRK1/TRKA.

The protein localises to the cell membrane. It localises to the lysosome membrane. In terms of biological role, structural component of specialized membrane microdomains known as tetraspanin-enriched microdomains (TERMs), which act as platforms for receptor clustering and signaling. Participates thereby in diverse biological functions such as cell signal transduction, adhesion, migration and protein trafficking. Regulates neuronal differentiation in response to NGF by facilitating NGF-mediated activation of NTRK1/TRKA receptor tyrosine kinase and subsequent downstream signaling pathways. Plays a role in the inhibition of TNFalpha-induced apoptosis. Mechanistically, inhibits the NF-kappa-B signaling pathway by blocking phosphorylation of CHUK. Also promotes the stability of the thiamine transporter 1/SLC19A2 in intestinal epithelial cells leading to an increase of thiamine uptake process. The polypeptide is Tetraspanin-1 (TSPAN1) (Homo sapiens (Human)).